Here is a 255-residue protein sequence, read N- to C-terminus: 5-oxoprolinase subunit A (255 aa).

Belongs to the LamB/PxpA family. As to quaternary structure, forms a complex composed of PxpA, PxpB and PxpC.

It catalyses the reaction 5-oxo-L-proline + ATP + 2 H2O = L-glutamate + ADP + phosphate + H(+). Functionally, catalyzes the cleavage of 5-oxoproline to form L-glutamate coupled to the hydrolysis of ATP to ADP and inorganic phosphate. The chain is 5-oxoprolinase subunit A from Clostridium beijerinckii (strain ATCC 51743 / NCIMB 8052) (Clostridium acetobutylicum).